The chain runs to 449 residues: Deoxyguanosinetriphosphate triphosphohydrolase-like protein (449 aa).

The interval 1 to 27 (MTSSVWQERRHGEDKQRRNDHRSPYQR) is disordered. A compositionally biased stretch (basic and acidic residues) spans 7–27 (QERRHGEDKQRRNDHRSPYQR). The region spanning 59 to 255 (RLTHSLEVSQ…MELADDIAYA (197 aa)) is the HD domain.

Belongs to the dGTPase family. Type 2 subfamily.

The sequence is that of Deoxyguanosinetriphosphate triphosphohydrolase-like protein from Shewanella baltica (strain OS223).